The chain runs to 114 residues: Nucleoid-associated protein Amet_4780 (114 aa).

The tract at residues 23–42 (QKMQKDMEKTQAALEEKEVE) is disordered. Basic and acidic residues predominate over residues 25 to 42 (MQKDMEKTQAALEEKEVE).

This sequence belongs to the YbaB/EbfC family. In terms of assembly, homodimer.

The protein resides in the cytoplasm. It is found in the nucleoid. In terms of biological role, binds to DNA and alters its conformation. May be involved in regulation of gene expression, nucleoid organization and DNA protection. This chain is Nucleoid-associated protein Amet_4780, found in Alkaliphilus metalliredigens (strain QYMF).